Consider the following 124-residue polypeptide: UPF0538 protein (124 aa).

The protein belongs to the UPF0538 family.

In Dictyostelium discoideum (Social amoeba), this protein is UPF0538 protein.